Here is a 244-residue protein sequence, read N- to C-terminus: Phosphoadenosine 5'-phosphosulfate reductase (244 aa).

Cys239 (nucleophile; cysteine thiosulfonate intermediate) is an active-site residue.

Belongs to the PAPS reductase family. CysH subfamily.

Its subcellular location is the cytoplasm. The catalysed reaction is [thioredoxin]-disulfide + sulfite + adenosine 3',5'-bisphosphate + 2 H(+) = [thioredoxin]-dithiol + 3'-phosphoadenylyl sulfate. It participates in sulfur metabolism; hydrogen sulfide biosynthesis; sulfite from sulfate: step 3/3. Functionally, catalyzes the formation of sulfite from phosphoadenosine 5'-phosphosulfate (PAPS) using thioredoxin as an electron donor. This Shigella flexneri serotype 5b (strain 8401) protein is Phosphoadenosine 5'-phosphosulfate reductase.